The primary structure comprises 318 residues: NADH-ubiquinone oxidoreductase chain 1 (318 aa).

The next 8 helical transmembrane spans lie at 2 to 22 (PMINLLLLILPTLIAMAFLML), 69 to 89 (ALYIIAPTLALTIALLLWTPL), 100 to 120 (LGLLFILATSSLTVYSILWSG), 147 to 167 (AIILLSVLLMSGSFNLSTLIT), 171 to 191 (HIWLLLPTWPLAMMWFISTLA), 222 to 242 (LFFMAEYVNIIMMNALTTMIF), 253 to 273 (ELYTTCFTIKTLLLTSLFLWI), and 294 to 314 (LPLTLTLLMWYISLSTMIASI).

Belongs to the complex I subunit 1 family. As to quaternary structure, core subunit of respiratory chain NADH dehydrogenase (Complex I) which is composed of 45 different subunits.

The protein resides in the mitochondrion inner membrane. The catalysed reaction is a ubiquinone + NADH + 5 H(+)(in) = a ubiquinol + NAD(+) + 4 H(+)(out). In terms of biological role, core subunit of the mitochondrial membrane respiratory chain NADH dehydrogenase (Complex I) which catalyzes electron transfer from NADH through the respiratory chain, using ubiquinone as an electron acceptor. Essential for the catalytic activity and assembly of complex I. The chain is NADH-ubiquinone oxidoreductase chain 1 (MT-ND1) from Hylobates lar (Lar gibbon).